Here is a 1279-residue protein sequence, read N- to C-terminus: ATP-dependent helicase/nuclease subunit A (1279 aa).

The UvrD-like helicase ATP-binding domain maps to 4 to 499; it reads TKWTDEQRQA…VKLFKNFRSR (496 aa). An ATP-binding site is contributed by 25–32; that stretch reads AGAGAGKT. In terms of domain architecture, UvrD-like helicase C-terminal spans 526 to 853; it reads EEALKVGASY…RIMSIHKSKG (328 aa).

It belongs to the helicase family. AddA subfamily. In terms of assembly, heterodimer of AddA and AddB/RexB. It depends on Mg(2+) as a cofactor.

The enzyme catalyses Couples ATP hydrolysis with the unwinding of duplex DNA by translocating in the 3'-5' direction.. It catalyses the reaction ATP + H2O = ADP + phosphate + H(+). Its function is as follows. The heterodimer acts as both an ATP-dependent DNA helicase and an ATP-dependent, dual-direction single-stranded exonuclease. Recognizes the chi site generating a DNA molecule suitable for the initiation of homologous recombination. The AddA nuclease domain is required for chi fragment generation; this subunit has the helicase and 3' -&gt; 5' nuclease activities. The sequence is that of ATP-dependent helicase/nuclease subunit A from Clostridium botulinum (strain 657 / Type Ba4).